Consider the following 1092-residue polypeptide: Probable cellulose synthase A catalytic subunit 6 [UDP-forming] (1092 aa).

The Cytoplasmic segment spans residues Met-1–Met-280. The Zn(2+) site is built by Cys-42, Cys-45, Cys-61, Cys-64, Cys-69, Cys-72, Cys-84, and Cys-87. An RING-type; degenerate zinc finger spans residues Cys-42–Lys-88. A disordered region spans residues Val-100–Asp-123. Positions Asp-103–Phe-116 are enriched in acidic residues. A helical membrane pass occupies residues Ile-281 to Val-301. Residues Asn-302–Asp-303 lie on the Extracellular side of the membrane. The chain crosses the membrane as a helical span at residues Ala-304–Leu-324. The Cytoplasmic portion of the chain corresponds to Asp-325–Ser-868. Residues Ser-363, Lys-369, Glu-370, and Asp-399 each coordinate UDP-alpha-D-glucose. Asp-399 is an active-site residue. Residues Val-453 to Val-480 are a coiled coil. Lys-540 contacts UDP-alpha-D-glucose. Mn(2+) is bound by residues Lys-541 and Asp-565. Residue Asp-792 is part of the active site. A helical membrane pass occupies residues Ile-869 to Leu-889. Residues Leu-890–Asn-901 lie on the Extracellular side of the membrane. The helical transmembrane segment at Val-902–Met-922 threads the bilayer. At Arg-923–Gln-937 the chain is on the cytoplasmic side. The chain crosses the membrane as a helical span at residues Phe-938–Val-958. Residues Leu-959–Thr-987 lie on the Extracellular side of the membrane. A helical transmembrane segment spans residues Thr-988 to Val-1008. The Cytoplasmic portion of the chain corresponds to Ser-1009 to Trp-1019. The helical transmembrane segment at Gly-1020–Leu-1040 threads the bilayer. Residues Lys-1041–Arg-1049 are Extracellular-facing. The helical transmembrane segment at Thr-1050–Val-1070 threads the bilayer. Residues Arg-1071–Asn-1092 lie on the Cytoplasmic side of the membrane.

Belongs to the glycosyltransferase 2 family. Plant cellulose synthase subfamily. Mn(2+) is required as a cofactor. Requires Zn(2+) as cofactor.

The protein localises to the cell membrane. It catalyses the reaction [(1-&gt;4)-beta-D-glucosyl](n) + UDP-alpha-D-glucose = [(1-&gt;4)-beta-D-glucosyl](n+1) + UDP + H(+). It functions in the pathway glycan metabolism; plant cellulose biosynthesis. Its function is as follows. Probable catalytic subunit of cellulose synthase terminal complexes ('rosettes'), required for beta-1,4-glucan microfibril crystallization, a major mechanism of the cell wall formation. This chain is Probable cellulose synthase A catalytic subunit 6 [UDP-forming] (CESA6), found in Oryza sativa subsp. japonica (Rice).